A 251-amino-acid chain; its full sequence is Appressoria-specific virulence factor GAS1 (251 aa).

An N-terminal signal peptide occupies residues 1–21 (MSLKSLIAATILAAPLVAGHG). Residues 40–76 (VTSTPRDGTRRDPFQQDSTRFKGQQADTFGETVGGGQ) are disordered. Polar residues predominate over residues 54-66 (QQDSTRFKGQQAD).

The protein resides in the cytoplasm. Its function is as follows. Appressoria-specific virulence factor required for appressorial penetration in host and lesion development. This Pyricularia oryzae (strain 70-15 / ATCC MYA-4617 / FGSC 8958) (Rice blast fungus) protein is Appressoria-specific virulence factor GAS1.